Consider the following 858-residue polypeptide: Protein translocase subunit SecA (858 aa).

ATP-binding positions include glutamine 88, 106–110, and aspartate 494; that span reads GEGKT. Residues 808–848 form a disordered region; the sequence is KEDRGQLSYSGGGNAEDARNTPAKAAPRIGRNDPCPCGSGR. 4 residues coordinate Zn(2+): cysteine 842, cysteine 844, cysteine 853, and cysteine 854.

The protein belongs to the SecA family. Monomer and homodimer. Part of the essential Sec protein translocation apparatus which comprises SecA, SecYEG and auxiliary proteins SecDF-YajC and YidC. The cofactor is Zn(2+).

It localises to the cell inner membrane. Its subcellular location is the cytoplasm. It catalyses the reaction ATP + H2O + cellular proteinSide 1 = ADP + phosphate + cellular proteinSide 2.. Its function is as follows. Part of the Sec protein translocase complex. Interacts with the SecYEG preprotein conducting channel. Has a central role in coupling the hydrolysis of ATP to the transfer of proteins into and across the cell membrane, serving as an ATP-driven molecular motor driving the stepwise translocation of polypeptide chains across the membrane. In Desulfovibrio desulfuricans (strain ATCC 27774 / DSM 6949 / MB), this protein is Protein translocase subunit SecA.